A 276-amino-acid chain; its full sequence is Small ribosomal subunit protein uS2 (276 aa).

Belongs to the universal ribosomal protein uS2 family.

The chain is Small ribosomal subunit protein uS2 from Chlamydia abortus (strain DSM 27085 / S26/3) (Chlamydophila abortus).